The chain runs to 343 residues: Phenylalanine--tRNA ligase alpha subunit (343 aa).

Residue glutamate 268 participates in Mg(2+) binding.

The protein belongs to the class-II aminoacyl-tRNA synthetase family. Phe-tRNA synthetase alpha subunit type 1 subfamily. Tetramer of two alpha and two beta subunits. The cofactor is Mg(2+).

The protein localises to the cytoplasm. The catalysed reaction is tRNA(Phe) + L-phenylalanine + ATP = L-phenylalanyl-tRNA(Phe) + AMP + diphosphate + H(+). In Cupriavidus taiwanensis (strain DSM 17343 / BCRC 17206 / CCUG 44338 / CIP 107171 / LMG 19424 / R1) (Ralstonia taiwanensis (strain LMG 19424)), this protein is Phenylalanine--tRNA ligase alpha subunit.